A 466-amino-acid polypeptide reads, in one-letter code: MPHSWDYDAVVIGSGPGGEGAAMGLVKQGARVAVIERYHNVGGGCTHWGTIPSKALRHAVSRIIEFNQNPLYSDHSRLLRSSFADILNHADNVINQQTRMRQGFYERNHCEILQGNAHFIDEHTLALECHDGTVETLTAEKFVIACGSRPYHPSDVDFSHPRIYDSDSILSLHHEPRHVIIYGAGVIGCEYASIFRGMDVKVDLINTRDRLLAFLDQEMSDSLSYHFWNSGVVIRHNEEYEKIEGCDDGVIMHLKSGKKLKADCLLYANGRTGNTDSLALENIGLETDSRGQLKVNSMYQTALPHVYAVGDVIGYPSLASAAYDQGRIAAQALVKGEATAHLIEDIPTGIYTIPEISSVGKTEQQLTAMKVPYEVGRAQFKHLARAQIVGMNVGTLKILFHRETKEILGIHCFGERAAEIIHIGQAIMEQKGGGNTIEYFVNTTFNYPTMAEAYRVAALNGLNRLF.

Position 36–45 (36–45) interacts with FAD; it reads ERYHNVGGGC.

The protein belongs to the class-I pyridine nucleotide-disulfide oxidoreductase family. FAD is required as a cofactor.

Its subcellular location is the cytoplasm. The enzyme catalyses NAD(+) + NADPH = NADH + NADP(+). In terms of biological role, conversion of NADPH, generated by peripheral catabolic pathways, to NADH, which can enter the respiratory chain for energy generation. This is Soluble pyridine nucleotide transhydrogenase from Salmonella paratyphi C (strain RKS4594).